Here is a 1992-residue protein sequence, read N- to C-terminus: MALVVHLKTVTELRGKGDRIAKVTFRGLSFFSRVLENCEDEARFEQAFRWPIGSQVDGDEMLEIQVFNYSKVFTNRLIGTFRMVLQKVVEEGHLEVSDTLIDDNNTAIQTTISIEIKYQTMDGSVKVWSDGEFLDIPDDLDGTFQFETDSLLSGRSQSSGTSPGRSIHGIPTFRKAGKGVFSAMKLGKTRTSKDDHKKGDDAAILDAEDLDRKAMRLGGILDPDTISLASVTAVTTNVSNKRSKPDIKMEPSSGRPVDYQISVTVIEARQLVGLNMDPVVCVEIGEEKKYTSMKESTNCPYYNEYFVFDFHVPPDVMFDKIIKISVIHSKNLLRSGTLVGTFKLDVGTVYTQPEHQFHHKWAMLSDPDDITTGCKGYVKCDIAVVGKGDNIKTPHKASEADEDDIEGNLLLPEGVPSERQWARFYVKIYRAEGLPKMNTSIMANVKKAFIGENRDLVDPYVLVQFAGQKGKTSVQKSSYEPIWNEQVIFTEMFPPLCRRLKVQIRDSDKVNDVAIGTHFIDLRKVSNDGDKGFLPTMGPAWVNMYGSTRNYTLMDEHQDLNEGLGEGVSFRARLLISIAVEILDTTSAEIMSSTEVHMEPVSNISESATGKMEEFFLFGSFLEATMIDRKIGDKPISFEVTIGNYGNQIDGVSKPALAKKKKEGGGESEEEESELIHNSSEEEAEDDGDLTSVPSTPPMKPVITDRNYFHLPYFEKKPCIYIKSWWQDQRRRLYNSNIMDKIADKLEEGLNDVQEIIKTEKAYPERRLRGVLEELSTSCSRFVTLANKDQNLSGRTKLDRERLKSCMREMESMGQQAKTIRTQVKRNTVRDKLKLVLNFLQRLRFLADEPQHSIPDVFIWMISNNKRIAYARIPSKDILYSIVDEEMGKDCGKVKAVFLRLPGKKGFGPAGWTVQAKLEMYLWLGLNKQRKDFLIGLPSGFEENKAVKGIGIQAVPPISLVYNMKQVFQLRAHMYQARSLFAADTSGLSDPFARVFFSTHSQVTEVLSETLCPTWDQLLVFDNVELYGEAGELRDDPPIIVIELYDQDTVGKAEFIGRTFAKPLTKMVDEHYGPPRFPPQLEYYQIYRGNCAAGDLLAAFELLQIGPAGRAALPPIDGPTDSDRGPILPVPLGIRPVLSRYRIEVLFWGLRDLKRVNLAQVDRPRVDIECAGKGVQSALIQNYKKNPNFSTLVKWFEVDLPENELLHPPLNIRVVDCRAFGRYILVGSHAVTTLRKFIYSPPDKTANNWAHTGDIVVNMSPEPNIKKMDTVVKIEATTDAVVKVDLNEDEKEKEKKKKKKKKGEEVEEEEPDESMLDWWSKYFASIETMMENLRAQEAAQAEAEEREDLEIAAESAEIKADDFPMKGTKPKEKSKDKKSTKDKKKNNDGTEKRPPKPKVDELMVYNKELESEFGSFEDWLHTFNLYRGKAGDDDDHNVVDEDRIVGRFKGSLCMYKLPLSEEITREAGFDPNMGMFQSIPHNDPINVLVRIYIIRATDLHPADINGKADPYIVIKLGKSDIRDKENYISKQLNPVFGKSFDIEATFPMESMLTVAVYDWDLVGTDDLIGETKIDLENRYYSKHRATCGIASNYSVHGYNVWRDPQKPAQILAKLCKEGKLDGPHYGPGGRVKVANRIFLGPTEIEDESGLKKQTEEHLALTVLRHWEEIPRVGCKLIPEHVETRPLLNPDKPGIEQGRIEMWVDMFPMDVPAPGPAIDISPRKPKRYELRVIIWNTDEVILEDDDYFTGEKSSDIFVRGWLKGQQEDKQDTDVHYHSLTGEGNFNWRFVFPFDYLMAEEKIVISKKESMFSWDETEYKIPARLTLQVWDADHFSADDFLGAIELDLNKFPRGAKTAKQCSLDMVLKEHELPTISIFKQKRVKGWWPFVAQNENDEFELTGKVEAELHLLTAEEAEKSPVGLGRNDPEPLEKPNRPDTSLMWFMNPLRSIRYFIWHNYRWLILKALALLLLLLLVGLFLYSIPGYLVKKLLGA.

C2 domains follow at residues 1 to 98, 241 to 362, and 405 to 536; these read MALV…EVSD, KRSK…HKWA, and IEGN…FLPT. Residues 1 to 1958 lie on the Cytoplasmic side of the membrane; sequence MALVVHLKTV…IRYFIWHNYR (1958 aa). The interval 655 to 699 is disordered; the sequence is PALAKKKKEGGGESEEEESELIHNSSEEEAEDDGDLTSVPSTPPM. C2 domains follow at residues 952 to 1077 and 1124 to 1250; these read IQAV…PPRF and RGPI…NNWA. Residues Asp984, Asp990, Asp1046, and Asp1048 each contribute to the Ca(2+) site. Residues 1282–1363 are a coiled coil; it reads VKVDLNEDEK…ESAEIKADDF (82 aa). Disordered stretches follow at residues 1288 to 1311 and 1354 to 1399; these read EDEKEKEKKKKKKKKGEEVEEEEP and ESAE…KPKV. Over residues 1356–1399 the composition is skewed to basic and acidic residues; it reads AEIKADDFPMKGTKPKEKSKDKKSTKDKKKNNDGTEKRPPKPKV. 2 C2 domains span residues 1470–1588 and 1711–1860; these read DPNM…ATCG and PAPG…KQCS. Ca(2+) contacts are provided by Asp1503, Asp1509, Asp1558, Asp1560, Asp1566, Asp1831, Ser1834, and Asp1837. Residues 1959–1979 form a helical membrane-spanning segment; that stretch reads WLILKALALLLLLLLVGLFLY. The Extracellular segment spans residues 1980–1992; it reads SIPGYLVKKLLGA.

The protein belongs to the ferlin family. The cofactor is Ca(2+).

It is found in the cytoplasmic vesicle. The protein resides in the secretory vesicle. The protein localises to the synaptic vesicle membrane. Its subcellular location is the basolateral cell membrane. It localises to the endoplasmic reticulum membrane. It is found in the golgi apparatus membrane. The protein resides in the presynaptic cell membrane. The protein localises to the cell membrane. Its function is as follows. Key calcium ion sensor involved in the Ca(2+)-triggered synaptic vesicle-plasma membrane fusion and in the control of neurotransmitter release at these output synapses. This chain is Otoferlin (otof), found in Danio rerio (Zebrafish).